Here is a 353-residue protein sequence, read N- to C-terminus: Uroporphyrinogen decarboxylase (353 aa).

Substrate-binding positions include 28–32 (RQAGR), Asp78, Tyr155, Ser210, and His325.

The protein belongs to the uroporphyrinogen decarboxylase family. Homodimer.

The protein localises to the cytoplasm. It catalyses the reaction uroporphyrinogen III + 4 H(+) = coproporphyrinogen III + 4 CO2. It functions in the pathway porphyrin-containing compound metabolism; protoporphyrin-IX biosynthesis; coproporphyrinogen-III from 5-aminolevulinate: step 4/4. Catalyzes the decarboxylation of four acetate groups of uroporphyrinogen-III to yield coproporphyrinogen-III. The protein is Uroporphyrinogen decarboxylase of Nostoc punctiforme (strain ATCC 29133 / PCC 73102).